Here is a 397-residue protein sequence, read N- to C-terminus: Elongation factor Tu 1 (397 aa).

The region spanning 10–206 (KPHVNIGTIG…AIDTWIPEPV (197 aa)) is the tr-type G domain. The segment at 19 to 26 (GHVDHGKT) is G1. 19–26 (GHVDHGKT) provides a ligand contact to GTP. Threonine 26 contacts Mg(2+). Residues 61-65 (GITIS) are G2. The G3 stretch occupies residues 82–85 (DCPG). Residues 82 to 86 (DCPGH) and 137 to 140 (NKCD) contribute to the GTP site. Residues 137 to 140 (NKCD) are G4. The interval 175-177 (SAL) is G5.

The protein belongs to the TRAFAC class translation factor GTPase superfamily. Classic translation factor GTPase family. EF-Tu/EF-1A subfamily. As to quaternary structure, monomer.

The protein localises to the cytoplasm. It carries out the reaction GTP + H2O = GDP + phosphate + H(+). GTP hydrolase that promotes the GTP-dependent binding of aminoacyl-tRNA to the A-site of ribosomes during protein biosynthesis. The chain is Elongation factor Tu 1 from Alkaliphilus metalliredigens (strain QYMF).